A 345-amino-acid polypeptide reads, in one-letter code: WD40 repeat protein poxJ (345 aa).

4 WD repeats span residues 15-49 (ANPP…YDVS), 59-100 (LFNF…EAQQ), 101-146 (VAAH…PLAT), and 250-284 (VNDV…RLKS).

This sequence belongs to the WD repeat rae1 family.

It participates in secondary metabolite biosynthesis. In terms of biological role, WD40 repeat protein; part of the gene cluster that mediates the biosynthesis of oxaleimides, cytotoxic compounds containing an unusual disubstituted succinimide moiety. The first step of the pathway is provided by the HR-PKS poxF that serves in a new mode of collaborative biosynthesis with the PKS-NRPS poxE, by providing the olefin containing amino acid substrate via the synthesis of an ACP-bound dec-4-enoate. The cytochrome P450 monooxygenase poxM-catalyzed oxidation at the alpha-position creates the enzyme-bound 2-hydroxydec-4-enoyl-ACP thioester, which may be prone to spontaneous hydrolysis to yield 2-hydroxydec-4-enoic acid due to increased electrophilicity of the carbonyl. 2-hydroxydec-4-enoic acid can then be further oxidized by poxM to yield the alpha-ketoacid 2-oxodec-4-enoicacid, which is reductively aminated by the aminotransferase poxL to yield (S,E)-2-aminodec-4-enoic acid. The Hybrid PKS-NRPS synthetase poxE then performs condensation between the octaketide product of its PKS modules and the amino group of (S,E)-2-aminodec-4-enoic acid which is activated and incorporated by the adenylation domain. The resulting aminoacyl product can be cyclized by the Diels-Alderase PoxQ and reductively released by the reductive (R) domain of poxE to yield an aldehyde intermediate. The released aldehyde is then substrate for a Knoevenagel condensation by the hydrolyase poxO followed by an oxidation at the 5-position of the pyrrolidone ring. The presence of the olefin from the amino acid building block allows for migration of the substituted allyl group to occur. This allylic transposition reaction takes place in a conjugate addition, semipinacol-like fashion to yield a succinimide intermediate. Iterative two-electron oxidations of the C7 methyl of the succinimide intermediate to the carboxylic acid can be catalyzed by one of two remaining cytochrome P450 monooxygenasess poxC or poxD to yield oxaleimide A. Subsequent oxidation yields the maleimide scaffold oxaleimide I. Both oxaleimide A and oxaleimide I can undergo oxidative modifications in the decalin ring to yield the series of products oxaleimides B to H. This is WD40 repeat protein poxJ from Penicillium oxalicum (strain 114-2 / CGMCC 5302) (Penicillium decumbens).